The following is a 628-amino-acid chain: WW domain-containing adapter protein with coiled-coil (628 aa).

Disordered stretches follow at residues 1-130 (MVMY…DDWS), 152-338 (EKPK…PQSP), and 417-532 (NQSP…SARS). Over residues 37–49 (SSDHRHDKMRDST) the composition is skewed to basic and acidic residues. Over residues 74-84 (GKAKSMHLHRV) the composition is skewed to basic residues. Low complexity predominate over residues 101–121 (NHSAIHSSNSHSSTPSKTSDS). Residues 123 to 156 (YDPADDWSEHISSSGKKYYYNCRTEVSQWEKPKE) enclose the WW domain. 2 stretches are compositionally biased toward basic and acidic residues: residues 152 to 168 (EKPK…KETS) and 176 to 185 (PKDRDYRREA). Positions 199–213 (DTSTMLPQNILSQTS) are enriched in polar residues. A compositionally biased stretch (basic and acidic residues) spans 214–227 (RHNDRDYRLPRTDS). 2 stretches are compositionally biased toward low complexity: residues 230-260 (SAAP…TVQP) and 299-331 (SDKS…TVPV). Over residues 420-446 (PMSLTSDASSPRSYVSPRISTPQTNTV) the composition is skewed to polar residues. A compositionally biased stretch (low complexity) spans 467 to 486 (GSKQGSSAQTASQQSSAADK). The segment covering 511-532 (PNHNSSTCASSTSAPQNSSARS) has biased composition (polar residues). Residues 599–625 (QATLREQRILFLRQQIKELEKLKNQNS) are a coiled coil.

It is found in the nucleus. Functionally, acts as a linker between gene transcription and histone H2B monoubiquitination at 'Lys-120' (H2BK120ub1). Positive regulator of amino acid starvation-induced autophagy. Positively regulates MTOR activity. May negatively regulate the ubiquitin proteasome pathway. This Xenopus tropicalis (Western clawed frog) protein is WW domain-containing adapter protein with coiled-coil (wac).